The following is a 410-amino-acid chain: Platelet-activating factor acetylhydrolase IB subunit alpha (410 aa).

Residues 1-38 are required for self-association and interaction with PAFAH1B2 and PAFAH1B3; the sequence is MVLSQRQRDELNRAIADYLRSNGYEEAYSVFKKEAELD. The interaction with NDE1 stretch occupies residues 1–66; it reads MVLSQRQRDE…SVIRLQKKVM (66 aa). The interaction with NDEL1 stretch occupies residues 1–102; that stretch reads MVLSQRQRDE…EWIPRPPEKY (102 aa). One can recognise a LisH domain in the interval 7 to 39; it reads QRDELNRAIADYLRSNGYEEAYSVFKKEAELDM. N6-acetyllysine is present on Lys53. Positions 56-82 form a coiled coil; the sequence is TSVIRLQKKVMELESKLNEAKEEFTSG. The tract at residues 83-410 is interaction with dynein and dynactin; the sequence is GPLGQKRDPK…DQTVKVWECR (328 aa). WD repeat units lie at residues 106 to 147, 148 to 187, 190 to 229, 232 to 271, 274 to 333, 336 to 377, and 378 to 410; these read GHRS…RTLK, GHTD…CIRT, GHDH…CVKT, GHRE…CKAE, EHEH…CLMT, GHDN…KTLN, and AHEH…WECR. Ser109 carries the phosphoserine modification. Positions 367–409 are interaction with DCX; that stretch reads YKNKRCMKTLNAHEHFVTSLDFHKTAPYVVTGSVDQTVKVWEC. An interaction with NDEL1 region spans residues 388 to 410; sequence FHKTAPYVVTGSVDQTVKVWECR.

This sequence belongs to the WD repeat LIS1/nudF family. Can self-associate. Component of the cytosolic PAF-AH (I) heterotetrameric enzyme, which is composed of PAFAH1B1 (beta), PAFAH1B2 (alpha2) and PAFAH1B3 (alpha1) subunits. The catalytic activity of the enzyme resides in the alpha1 (PAFAH1B3) and alpha2 (PAFAH1B2) subunits, whereas the beta subunit (PAFAH1B1) has regulatory activity. Trimer formation is not essential for the catalytic activity. Interacts with the catalytic dimer of PAF-AH (I) heterotetrameric enzyme: interacts with PAFAH1B2 homodimer (alpha2/alpha2 homodimer), PAFAH1B3 homodimer (alpha1/alpha1 homodimer) and PAFAH1B2-PAFAH1B3 heterodimer (alpha2/alpha1 heterodimer). Interacts with DCX, dynein, dynactin, IQGAP1, KATNB1, NDE1, NDEL1, NUDC and RSN. Interacts with DISC1, and this interaction is enhanced by NDEL1. Interacts with DAB1 when DAB1 is phosphorylated in response to RELN/reelin signaling. Interacts with INTS13. Interacts with DCDC1.

It is found in the cytoplasm. Its subcellular location is the cytoskeleton. The protein resides in the microtubule organizing center. It localises to the centrosome. The protein localises to the spindle. It is found in the nucleus membrane. In terms of biological role, regulatory subunit (beta subunit) of the cytosolic type I platelet-activating factor (PAF) acetylhydrolase (PAF-AH (I)), an enzyme that catalyzes the hydrolyze of the acetyl group at the sn-2 position of PAF and its analogs and participates in PAF inactivation. Regulates the PAF-AH (I) activity in a catalytic dimer composition-dependent manner. Positively regulates the activity of the minus-end directed microtubule motor protein dynein. May enhance dynein-mediated microtubule sliding by targeting dynein to the microtubule plus end. Required for several dynein- and microtubule-dependent processes such as the maintenance of Golgi integrity, the peripheral transport of microtubule fragments and the coupling of the nucleus and centrosome. Required during brain development for the proliferation of neuronal precursors and the migration of newly formed neurons from the ventricular/subventricular zone toward the cortical plate. Neuronal migration involves a process called nucleokinesis, whereby migrating cells extend an anterior process into which the nucleus subsequently translocates. During nucleokinesis dynein at the nuclear surface may translocate the nucleus towards the centrosome by exerting force on centrosomal microtubules. Also required for proper activation of Rho GTPases and actin polymerization at the leading edge of locomoting cerebellar neurons and postmigratory hippocampal neurons in response to calcium influx triggered via NMDA receptors. May also play a role in other forms of cell locomotion including the migration of fibroblasts during wound healing. Required for dynein recruitment to microtubule plus ends and BICD2-bound cargos. May modulate the Reelin pathway through interaction of the PAF-AH (I) catalytic dimer with VLDLR. The polypeptide is Platelet-activating factor acetylhydrolase IB subunit alpha (Sus scrofa (Pig)).